A 367-amino-acid polypeptide reads, in one-letter code: Peptide chain release factor 2 (367 aa).

Gln-250 carries the N5-methylglutamine modification.

Belongs to the prokaryotic/mitochondrial release factor family. Methylated by PrmC. Methylation increases the termination efficiency of RF2.

It localises to the cytoplasm. Its function is as follows. Peptide chain release factor 2 directs the termination of translation in response to the peptide chain termination codons UGA and UAA. The chain is Peptide chain release factor 2 from Saccharopolyspora erythraea (strain ATCC 11635 / DSM 40517 / JCM 4748 / NBRC 13426 / NCIMB 8594 / NRRL 2338).